Here is a 236-residue protein sequence, read N- to C-terminus: Uridylate kinase (236 aa).

9 to 12 (KFSG) is a binding site for ATP. An involved in allosteric activation by GTP region spans residues 17–22 (GNSGFG). Glycine 51 is a binding site for UMP. ATP is bound by residues glycine 52 and arginine 56. UMP contacts are provided by residues aspartate 72 and 133–140 (TGNPFFTT). Positions 160, 166, and 169 each coordinate ATP.

The protein belongs to the UMP kinase family. In terms of assembly, homohexamer.

The protein localises to the cytoplasm. The catalysed reaction is UMP + ATP = UDP + ADP. It functions in the pathway pyrimidine metabolism; CTP biosynthesis via de novo pathway; UDP from UMP (UMPK route): step 1/1. With respect to regulation, allosterically activated by GTP. Inhibited by UTP. In terms of biological role, catalyzes the reversible phosphorylation of UMP to UDP. The protein is Uridylate kinase of Helicobacter hepaticus (strain ATCC 51449 / 3B1).